The primary structure comprises 570 residues: Proline--tRNA ligase (570 aa).

This sequence belongs to the class-II aminoacyl-tRNA synthetase family. ProS type 1 subfamily. Homodimer.

It localises to the cytoplasm. The enzyme catalyses tRNA(Pro) + L-proline + ATP = L-prolyl-tRNA(Pro) + AMP + diphosphate. In terms of biological role, catalyzes the attachment of proline to tRNA(Pro) in a two-step reaction: proline is first activated by ATP to form Pro-AMP and then transferred to the acceptor end of tRNA(Pro). As ProRS can inadvertently accommodate and process non-cognate amino acids such as alanine and cysteine, to avoid such errors it has two additional distinct editing activities against alanine. One activity is designated as 'pretransfer' editing and involves the tRNA(Pro)-independent hydrolysis of activated Ala-AMP. The other activity is designated 'posttransfer' editing and involves deacylation of mischarged Ala-tRNA(Pro). The misacylated Cys-tRNA(Pro) is not edited by ProRS. This is Proline--tRNA ligase from Clostridium botulinum (strain Eklund 17B / Type B).